Consider the following 130-residue polypeptide: Small ribosomal subunit protein uS9 (130 aa).

It belongs to the universal ribosomal protein uS9 family.

The polypeptide is Small ribosomal subunit protein uS9 (Pectobacterium carotovorum subsp. carotovorum (strain PC1)).